Reading from the N-terminus, the 385-residue chain is MTTDAELRELTVGTGAGGEQLGTDMVLNIGPQHPSTHGVLRLRLVLDGERVVSAEPIVGYMHRGAEKLFEVRDYRQIIVLANRHDWLSAFANELGVVLAVERLMGMEVPERATWLRMALAELNRVLNHLMFLGSYPLEIGAITPMFYAFRERETLQAVLEEVSGGRIHYMFNRVGGLKEEVPAGWTGRARTAIGEVRRRMPDLDRLIRRNEIFLARTVGVGVLSAAQAAAFGASGPVARASGLDLDLRRDEPYLAYDQLEVPVVTRTAGDCHSRFEVLLDQVYVSLDLAEQCLDQVDRLTGPVNTRLPKVLKAPEGHTYAWTENPLGINGYYLVSRGEKTPWRLKLRTASYANVQALATLLPGCLVPDLIAILGSMFFVVGDIDK.

It belongs to the complex I 49 kDa subunit family. As to quaternary structure, NDH-1 is composed of 14 different subunits. Subunits NuoB, C, D, E, F, and G constitute the peripheral sector of the complex.

The protein localises to the cell membrane. The enzyme catalyses a quinone + NADH + 5 H(+)(in) = a quinol + NAD(+) + 4 H(+)(out). In terms of biological role, NDH-1 shuttles electrons from NADH, via FMN and iron-sulfur (Fe-S) centers, to quinones in the respiratory chain. The immediate electron acceptor for the enzyme in this species is believed to be a menaquinone. Couples the redox reaction to proton translocation (for every two electrons transferred, four hydrogen ions are translocated across the cytoplasmic membrane), and thus conserves the redox energy in a proton gradient. The protein is NADH-quinone oxidoreductase subunit D 2 of Salinispora arenicola (strain CNS-205).